A 349-amino-acid polypeptide reads, in one-letter code: N-acetyltaurine hydrolase (349 aa).

Residues histidine 26, histidine 28, glutamate 169, histidine 201, histidine 230, and aspartate 298 each coordinate a divalent metal cation.

This sequence belongs to the metallo-dependent hydrolases superfamily. Phosphotriesterase family. A divalent metal cation is required as a cofactor.

The protein localises to the cytoplasm. The protein resides in the cytosol. The enzyme catalyses N-acetyltaurine + H2O = taurine + acetate. The catalysed reaction is N-propanoyltaurine + H2O = propanoate + taurine. It carries out the reaction N-acetyl-L-methionine + H2O = L-methionine + acetate. It catalyses the reaction N-acetyl-L-isoleucine + H2O = L-isoleucine + acetate. The enzyme catalyses N-acetyl-L-leucine + H2O = L-leucine + acetate. The catalysed reaction is N-acetyl-L-valine + H2O = L-valine + acetate. Functionally, N-acetyltaurine hydrolase that regulates feeding by catalyzing the hydrolysis of N-acetyltaurine into taurine and acetate. N-acetyltaurine has anorexigenic and anti-obesity effects that are dependent on GFRAL receptor and GDF15. PTER also acts on other N-acetyl amino acids (Met, Ile, Leu, Val) and N-propionyltaurine, but at lower rates. The protein is N-acetyltaurine hydrolase of Pongo abelii (Sumatran orangutan).